The chain runs to 637 residues: Biosynthetic arginine decarboxylase (637 aa).

Lys101 bears the N6-(pyridoxal phosphate)lysine mark. 286–296 (FDVGGGLAVDY) contributes to the substrate binding site.

This sequence belongs to the Orn/Lys/Arg decarboxylase class-II family. SpeA subfamily. Mg(2+) is required as a cofactor. It depends on pyridoxal 5'-phosphate as a cofactor.

The catalysed reaction is L-arginine + H(+) = agmatine + CO2. It functions in the pathway amine and polyamine biosynthesis; agmatine biosynthesis; agmatine from L-arginine: step 1/1. Its function is as follows. Catalyzes the biosynthesis of agmatine from arginine. The chain is Biosynthetic arginine decarboxylase from Shewanella woodyi (strain ATCC 51908 / MS32).